A 377-amino-acid chain; its full sequence is Chaperone protein DnaJ (377 aa).

Positions 5-69 constitute a J domain; sequence DYYEVLGISK…QKRAQYDQYG (65 aa). The segment at 134 to 216 adopts a CR-type zinc-finger fold; the sequence is GKDAEIEIPR…CHGKGRVTKT (83 aa). Zn(2+) is bound by residues Cys-147, Cys-150, Cys-164, Cys-167, Cys-190, Cys-193, Cys-204, and Cys-207. CXXCXGXG motif repeat units lie at residues 147–154, 164–171, 190–197, and 204–211; these read CDTCHGSG, CSHCGGKG, CQYCNGTG, and CPTCHGKG.

Belongs to the DnaJ family. As to quaternary structure, homodimer. The cofactor is Zn(2+).

The protein resides in the cytoplasm. Participates actively in the response to hyperosmotic and heat shock by preventing the aggregation of stress-denatured proteins and by disaggregating proteins, also in an autonomous, DnaK-independent fashion. Unfolded proteins bind initially to DnaJ; upon interaction with the DnaJ-bound protein, DnaK hydrolyzes its bound ATP, resulting in the formation of a stable complex. GrpE releases ADP from DnaK; ATP binding to DnaK triggers the release of the substrate protein, thus completing the reaction cycle. Several rounds of ATP-dependent interactions between DnaJ, DnaK and GrpE are required for fully efficient folding. Also involved, together with DnaK and GrpE, in the DNA replication of plasmids through activation of initiation proteins. The chain is Chaperone protein DnaJ from Listeria monocytogenes serotype 1/2a (strain 10403S).